The primary structure comprises 155 residues: SsrA-binding protein (155 aa).

Positions Thr135–Lys147 are enriched in basic and acidic residues. The tract at residues Thr135 to Arg155 is disordered.

It belongs to the SmpB family.

It localises to the cytoplasm. Functionally, required for rescue of stalled ribosomes mediated by trans-translation. Binds to transfer-messenger RNA (tmRNA), required for stable association of tmRNA with ribosomes. tmRNA and SmpB together mimic tRNA shape, replacing the anticodon stem-loop with SmpB. tmRNA is encoded by the ssrA gene; the 2 termini fold to resemble tRNA(Ala) and it encodes a 'tag peptide', a short internal open reading frame. During trans-translation Ala-aminoacylated tmRNA acts like a tRNA, entering the A-site of stalled ribosomes, displacing the stalled mRNA. The ribosome then switches to translate the ORF on the tmRNA; the nascent peptide is terminated with the 'tag peptide' encoded by the tmRNA and targeted for degradation. The ribosome is freed to recommence translation, which seems to be the essential function of trans-translation. The polypeptide is SsrA-binding protein (Streptococcus pyogenes serotype M6 (strain ATCC BAA-946 / MGAS10394)).